Reading from the N-terminus, the 995-residue chain is Protein translocase subunit SecA (995 aa).

Residues Gln86, 104–108, and Asp535 contribute to the ATP site; that span reads GEGKT. A disordered region spans residues 883-911; the sequence is AQTVSSDGNGEVVRKPQRRSTPQIGRNEL. 4 residues coordinate Zn(2+): Cys912, Cys914, Cys923, and His924. The interval 939–995 is disordered; it reads PSAPPASKALKSTPATQTAVAEEAAKIQAAINSGKLPPTQTTPRGRQAPSVPRGKKR. Over residues 957-969 the composition is skewed to low complexity; the sequence is AVAEEAAKIQAAI.

It belongs to the SecA family. Monomer and homodimer. Part of the essential Sec protein translocation apparatus which comprises SecA, SecYEG and auxiliary proteins SecDF. Other proteins may also be involved. It depends on Zn(2+) as a cofactor.

The protein localises to the cell membrane. It localises to the cytoplasm. The enzyme catalyses ATP + H2O + cellular proteinSide 1 = ADP + phosphate + cellular proteinSide 2.. Functionally, part of the Sec protein translocase complex. Interacts with the SecYEG preprotein conducting channel. Has a central role in coupling the hydrolysis of ATP to the transfer of proteins into and across the cell membrane, serving as an ATP-driven molecular motor driving the stepwise translocation of polypeptide chains across the membrane. The polypeptide is Protein translocase subunit SecA (Chloroflexus aurantiacus (strain ATCC 29366 / DSM 635 / J-10-fl)).